Consider the following 218-residue polypeptide: Phosphoribosylformylglycinamidine synthase subunit PurQ (218 aa).

One can recognise a Glutamine amidotransferase type-1 domain in the interval Thr-2 to Asn-218. Cys-86 acts as the Nucleophile in catalysis. Active-site residues include His-194 and Glu-196.

As to quaternary structure, part of the FGAM synthase complex composed of 1 PurL, 1 PurQ and 2 PurS subunits.

The protein resides in the cytoplasm. It carries out the reaction N(2)-formyl-N(1)-(5-phospho-beta-D-ribosyl)glycinamide + L-glutamine + ATP + H2O = 2-formamido-N(1)-(5-O-phospho-beta-D-ribosyl)acetamidine + L-glutamate + ADP + phosphate + H(+). The catalysed reaction is L-glutamine + H2O = L-glutamate + NH4(+). It participates in purine metabolism; IMP biosynthesis via de novo pathway; 5-amino-1-(5-phospho-D-ribosyl)imidazole from N(2)-formyl-N(1)-(5-phospho-D-ribosyl)glycinamide: step 1/2. Its function is as follows. Part of the phosphoribosylformylglycinamidine synthase complex involved in the purines biosynthetic pathway. Catalyzes the ATP-dependent conversion of formylglycinamide ribonucleotide (FGAR) and glutamine to yield formylglycinamidine ribonucleotide (FGAM) and glutamate. The FGAM synthase complex is composed of three subunits. PurQ produces an ammonia molecule by converting glutamine to glutamate. PurL transfers the ammonia molecule to FGAR to form FGAM in an ATP-dependent manner. PurS interacts with PurQ and PurL and is thought to assist in the transfer of the ammonia molecule from PurQ to PurL. This is Phosphoribosylformylglycinamidine synthase subunit PurQ from Prochlorococcus marinus (strain SARG / CCMP1375 / SS120).